Reading from the N-terminus, the 228-residue chain is Probable septum site-determining protein MinC (228 aa).

The protein belongs to the MinC family. Interacts with MinD and FtsZ.

Functionally, cell division inhibitor that blocks the formation of polar Z ring septums. Rapidly oscillates between the poles of the cell to destabilize FtsZ filaments that have formed before they mature into polar Z rings. Prevents FtsZ polymerization. The chain is Probable septum site-determining protein MinC from Bacillus cytotoxicus (strain DSM 22905 / CIP 110041 / 391-98 / NVH 391-98).